The primary structure comprises 737 residues: MPLNRTLSMSSLPGLEDWEDEFDLENAVLFEVAWEVANKVGGIYTVLQTKAKVTGDEWGDNYFLVGPYTEQGVRTQVELLEAPTPALKRTLDSMNSKGCKVYFGRWLIEGGPLVVLLDVGASAWALERWKGELWDTCNIGVPWYDREANDAVLFGFLTTWFLGEFLAQSEEKPHVVAHFHEWLAGVGLCLCRARRLPVATIFTTHATLLGRYLCAGAVDFYNNLENFNVDKEAGERQIYHRYCMERAAAHCAHVFTTVSQITAIEAQHLLKRKPDIVTPNGLNVKKFSAMHEFQNLHAQSKARIQEFVRGHFYGHLDFNLDKTLYFFIAGRYEFSNKGADVFLEALARLNYLLRVNGSEQTVVAFFIMPARTNNFNVETLKGQAVRKQLWDTANTVKEKFGRKLYESLLVGSLPDMNKMLDKEDFTMMKRAIFATQRQSFPPVCTHNMLDDSSDPILTTIRRIGLFNSSADRVKVIFHPEFLSSTSPLLPVDYEEFVRGCHLGVFPSYYEPWGYTPAECTVMGIPSISTNLSGFGCFMEEHIADPSAYGIYILDRRFRSLDDSCSQLTSFLYSFCQQSRRQRIIQRNRTERLSDLLDWKYLGRYYMSARHMALSKAFPEHFTYEPNEADAAQGYRYPRPASVPPSPSLSRHSSPHQSEDEEDPRNGPLEEDGERYDEDEEAAKDRRNIRAPEWPRRASCTSSTSGSKRNSVDTATSSSLSTPSEPLSPTSSLGEERN.

Residue Ser8 is modified to Phosphoserine; by AMPK and PKA. Phosphoserine is present on Ser11. Lys39 contacts UDP. The UDP-alpha-D-glucose site is built by His205 and Arg211. Alpha-D-glucose 6-phosphate contacts are provided by His291, Glu292, Gln294, His297, and Lys301. Arg331 is a binding site for UDP. Arg331 contacts UDP-alpha-D-glucose. At Ser412 the chain carries Phosphoserine. Alpha-D-glucose 6-phosphate is bound at residue His501. UDP-alpha-D-glucose contacts are provided by Glu510, Trp512, and Gly513. Position 515 (Thr515) interacts with UDP. The alpha-D-glucose 6-phosphate site is built by Arg582 and Arg586. Positions 634 to 737 are disordered; it reads YRYPRPASVP…PTSSLGEERN (104 aa). A phosphoserine mark is found at Ser641, Ser645, Ser649, and Ser652. Ser653 bears the Phosphoserine; by GSK3-alpha and GSK3-beta mark. Ser657 is subject to Phosphoserine; by CK2. Residues 658 to 681 are compositionally biased toward acidic residues; that stretch reads EDEEDPRNGPLEEDGERYDEDEEA. Over residues 682–695 the composition is skewed to basic and acidic residues; that stretch reads AKDRRNIRAPEWPR. Ser698 is modified (phosphoserine). Residues 698–714 are compositionally biased toward polar residues; that stretch reads SCTSSTSGSKRNSVDTA. A Phosphothreonine modification is found at Thr700. Ser710 is subject to Phosphoserine. Residues 715–737 show a composition bias toward low complexity; the sequence is TSSSLSTPSEPLSPTSSLGEERN. Thr721 carries the post-translational modification Phosphothreonine. Phosphoserine is present on residues Ser727 and Ser731.

It belongs to the glycosyltransferase 3 family. As to quaternary structure, part of the GYS1-GYG1 complex, a heterooctamer composed of a tetramer of GYS1 and 2 dimers of GYG1, where each GYS1 protomer binds to one GYG1 subunit (via GYG1 C-terminus); the GYS1 tetramer may dissociate from GYG1 dimers to continue glycogen polymerization on its own. Post-translationally, phosphorylation at Ser-8 by AMPK inactivates the enzyme activity. Primed phosphorylation at Ser-657 (site 5) by CSNK2A1 and CSNK2A2 is required for inhibitory phosphorylation at Ser-641 (site 3a), Ser-645 (site 3b), Ser-649 (site 3c) and Ser-653 (site 4) by GSK3A an GSK3B. Phosphorylated at Ser-641 by DYRK2, leading to inactivation. Phosphorylated at Ser-641 by PASK, leading to inactivation; phosphorylation by PASK is inhibited by glycogen. Dephosphorylation at Ser-641 and Ser-645 by PP1 activates the enzyme. Expressed in skeletal muscle and most other cell types where glycogen is present.

It catalyses the reaction [(1-&gt;4)-alpha-D-glucosyl](n) + UDP-alpha-D-glucose = [(1-&gt;4)-alpha-D-glucosyl](n+1) + UDP + H(+). The protein operates within glycan biosynthesis; glycogen biosynthesis. With respect to regulation, allosteric activation by glucose-6-phosphate. Phosphorylation reduces enzyme activity by constraining a tense conformation of the tetramer through inter-subunit interaction. Phosphorylation reduces the activity towards UDP-glucose. When in the non-phosphorylated state, glycogen synthase does not require glucose-6-phosphate as an allosteric activator; when phosphorylated it does. Functionally, glycogen synthase participates in the glycogen biosynthetic process along with glycogenin and glycogen branching enzyme. Extends the primer composed of a few glucose units formed by glycogenin by adding new glucose units to it. In this context, glycogen synthase transfers the glycosyl residue from UDP-Glc to the non-reducing end of alpha-1,4-glucan. The chain is Glycogen [starch] synthase, muscle from Homo sapiens (Human).